Here is a 262-residue protein sequence, read N- to C-terminus: Ribosomal RNA small subunit methyltransferase A (262 aa).

S-adenosyl-L-methionine-binding residues include isoleucine 18, glycine 43, glutamate 65, aspartate 91, and asparagine 110.

This sequence belongs to the class I-like SAM-binding methyltransferase superfamily. rRNA adenine N(6)-methyltransferase family. RsmA subfamily.

It localises to the cytoplasm. The enzyme catalyses adenosine(1518)/adenosine(1519) in 16S rRNA + 4 S-adenosyl-L-methionine = N(6)-dimethyladenosine(1518)/N(6)-dimethyladenosine(1519) in 16S rRNA + 4 S-adenosyl-L-homocysteine + 4 H(+). In terms of biological role, specifically dimethylates two adjacent adenosines (A1518 and A1519) in the loop of a conserved hairpin near the 3'-end of 16S rRNA in the 30S particle. May play a critical role in biogenesis of 30S subunits. The protein is Ribosomal RNA small subunit methyltransferase A of Ehrlichia canis (strain Jake).